Reading from the N-terminus, the 106-residue chain is PTS system fructose-like EIIB component 2 (106 aa).

The region spanning 1-103 (MTKIIAVTAC…IMSKIEAHLA (103 aa)) is the PTS EIIB type-2 domain. Residue cysteine 10 is the Phosphocysteine intermediate of the active site. Cysteine 10 is modified (phosphocysteine; by EIIA).

The protein localises to the cytoplasm. The catalysed reaction is D-fructose(out) + N(pros)-phospho-L-histidyl-[protein] = D-fructose 1-phosphate(in) + L-histidyl-[protein]. The phosphoenolpyruvate-dependent sugar phosphotransferase system (sugar PTS), a major carbohydrate active transport system, catalyzes the phosphorylation of incoming sugar substrates concomitantly with their translocation across the cell membrane. The enzyme II FrwABC PTS system is involved in fructose transport. In Escherichia coli O157:H7, this protein is PTS system fructose-like EIIB component 2 (frwB).